The primary structure comprises 709 residues: Potassium-transporting ATPase ATP-binding subunit (709 aa).

4 helical membrane-spanning segments follow: residues 55 to 75 (VMLV…RDLA), 86 to 106 (GLVA…EAMA), 236 to 256 (IALN…VVTL), and 269 to 289 (VVVL…ALLS). The active-site 4-aspartylphosphate intermediate is the Asp324. ATP is bound by residues Asp361, Glu365, 395 to 402 (FTAETRMS), and Lys417. Mg(2+) contacts are provided by Asp545 and Asp549. The next 3 membrane-spanning stretches (helical) occupy residues 615–635 (FAII…LNVM), 643–663 (AILS…PLAL), and 688–708 (GLVV…ALGV).

Belongs to the cation transport ATPase (P-type) (TC 3.A.3) family. Type IA subfamily. In terms of assembly, the system is composed of three essential subunits: KdpA, KdpB and KdpC.

It localises to the cell membrane. The catalysed reaction is K(+)(out) + ATP + H2O = K(+)(in) + ADP + phosphate + H(+). Part of the high-affinity ATP-driven potassium transport (or Kdp) system, which catalyzes the hydrolysis of ATP coupled with the electrogenic transport of potassium into the cytoplasm. This subunit is responsible for energy coupling to the transport system and for the release of the potassium ions to the cytoplasm. This Mycobacterium tuberculosis (strain ATCC 25618 / H37Rv) protein is Potassium-transporting ATPase ATP-binding subunit.